Reading from the N-terminus, the 1040-residue chain is Multidrug resistance protein MdtB (1040 aa).

12 helical membrane-spanning segments follow: residues Phe16 to Ile36, Leu347 to Ala367, Ile369 to Leu389, Leu396 to Ile416, Ile440 to Phe460, Phe472 to Pro492, Trp537 to Ile557, Leu863 to Ile883, Phe888 to Ala908, Ile911 to Val931, Ile968 to Val988, and Ile998 to Ile1018.

This sequence belongs to the resistance-nodulation-cell division (RND) (TC 2.A.6) family. MdtB subfamily. Part of a tripartite efflux system composed of MdtA, MdtB and MdtC. MdtB forms a heteromultimer with MdtC.

The protein resides in the cell inner membrane. In terms of biological role, the MdtABC tripartite complex confers resistance against novobiocin and deoxycholate. The sequence is that of Multidrug resistance protein MdtB from Escherichia coli (strain K12 / MC4100 / BW2952).